Reading from the N-terminus, the 268-residue chain is Tryptophan synthase alpha chain (268 aa).

Catalysis depends on proton acceptor residues E49 and D60.

This sequence belongs to the TrpA family. In terms of assembly, tetramer of two alpha and two beta chains.

It carries out the reaction (1S,2R)-1-C-(indol-3-yl)glycerol 3-phosphate + L-serine = D-glyceraldehyde 3-phosphate + L-tryptophan + H2O. It functions in the pathway amino-acid biosynthesis; L-tryptophan biosynthesis; L-tryptophan from chorismate: step 5/5. The alpha subunit is responsible for the aldol cleavage of indoleglycerol phosphate to indole and glyceraldehyde 3-phosphate. This chain is Tryptophan synthase alpha chain, found in Salmonella agona (strain SL483).